The primary structure comprises 615 residues: ATP-dependent RNA helicase mrh4, mitochondrial (615 aa).

Residues 1 to 37 (MLRPKAGKCLLCSFRAAQKPVSQKWPSRALSMRTRLP) constitute a mitochondrion transit peptide. A disordered region spans residues 21 to 108 (VSQKWPSRAL…HRDRDDKKDR (88 aa)). Basic and acidic residues predominate over residues 90 to 108 (QERRTSRLDHRDRDDKKDR). The short motif at 138-171 (QSFEQFALLDSVKQAIFQQALPELKEHVPTPVQR) is the Q motif element. Positions 184-395 (RRPKSEMEQY…RKRFPDINRL (212 aa)) constitute a Helicase ATP-binding domain. An ATP-binding site is contributed by 197-204 (AETGSGKT). Residues 342–345 (DEAD) carry the DEAD box motif. The region spanning 444 to 615 (PVKGLMDVKR…EGMFEGKALI (172 aa)) is the Helicase C-terminal domain.

It belongs to the DEAD box helicase family. MRH4 subfamily.

It localises to the mitochondrion. It carries out the reaction ATP + H2O = ADP + phosphate + H(+). ATP-binding RNA helicase involved in mitochondrial RNA metabolism. Required for maintenance of mitochondrial DNA. The sequence is that of ATP-dependent RNA helicase mrh4, mitochondrial (mrh4) from Sclerotinia sclerotiorum (strain ATCC 18683 / 1980 / Ss-1) (White mold).